A 206-amino-acid polypeptide reads, in one-letter code: Large ribosomal subunit protein uL22m (206 aa).

The N-terminal 40 residues, 1–40 (MAAAVLGQLGALWIHNLRSRGRLAWGVLPQSYVHTSASLD), are a transit peptide targeting the mitochondrion.

This sequence belongs to the universal ribosomal protein uL22 family. Component of the mitochondrial ribosome large subunit (39S) which comprises a 16S rRNA and about 50 distinct proteins.

It is found in the mitochondrion. The polypeptide is Large ribosomal subunit protein uL22m (MRPL22) (Pongo abelii (Sumatran orangutan)).